An 828-amino-acid polypeptide reads, in one-letter code: Vacuolar transporter chaperone complex subunit 2 (828 aa).

Residues 1 to 146 (MLFGVKLANE…PKYPSVKSLL (146 aa)) enclose the SPX domain. Over 1-693 (MLFGVKLANE…EAKVWLANER (693 aa)) the chain is Cytoplasmic. Residues 127 to 134 (KIVKKHDK) are important for inositol polyphosphate binding. 7 positions are modified to phosphoserine: S182, S187, S196, S264, S583, S615, and S616. Positions 580–636 (RRLSNLKEPQHQAAVPVSQEENERITSQGDLEADGSSDEETEQEPHSKRSKKVRRRK) are disordered. The segment covering 610-621 (LEADGSSDEETE) has biased composition (acidic residues). T620 carries the phosphothreonine modification. A Phosphoserine modification is found at S626. The segment covering 627–636 (KRSKKVRRRK) has biased composition (basic residues). Residue S657 is modified to Phosphoserine. Residues 694–716 (TFNRWLSVTSLLSVLTFSIYNSV) traverse the membrane as a helical segment. Topologically, residues 717 to 727 (KKAEYPTLANY) are vacuolar. Residues 728–748 (MAYVYFGLTIFCALWSYSIYM) traverse the membrane as a helical segment. Topologically, residues 749–766 (KRVDIIQQRSGQHLDAPL) are cytoplasmic. A helical transmembrane segment spans residues 767-787 (GPVLVSIVLFVTLVVNFVMAF). The Vacuolar segment spans residues 788–828 (RNAAKSRQELQIQNLEVPERIPEVLRPLQNYLFKLMGPSSD).

This sequence belongs to the VTC2/3 family. As to quaternary structure, the VTC core complex is an integral membrane heterooligomer composed of the catalytic subunit VTC4 and the accessory subunits VTC1, VTC2 and VTC3. The complex exists in 2 different sub-complexes: VTC1-VTC2-VCT4 and VCT1-VTC3-VTC4. The VCT1-VTC3-VTC4 subcomplex is mostly found on the vacuolar membrane. The VTC1-VTC2-VCT4 subcomplex is observed in the cell periphery, probably ER and nuclear envelope, but localizes to the vacuole under phosphate starvation. Each subunit contains 3 transmembrane helices. VTC1 is a small membrane protein without hydrophilic domain. VTC2, VTC3 and VTC4 are related and have 2 hydrophilic domains that face the cytosol, an N-terminal SPX domain and the central core domain. The central core in VTC4 is the catalytic domain, with the essential catalytic lysine replaced by isoleucine and leucine in VTC2 and VTC3, respectively. The core complex associates with the accessory subunit VTC5. The complex interacts with the v-SNARE NYV1 and with the V(0) subunit of V-ATPase VPH1.

Its subcellular location is the vacuole membrane. The protein localises to the cytoplasm. The protein resides in the cell cortex. It is found in the endoplasmic reticulum membrane. It localises to the cytoplasmic vesicle. Its subcellular location is the autophagosome membrane. Functionally, accessory subunit of the vacuolar transporter chaperone (VTC) complex. The VTC complex acts as a vacuolar polyphosphate polymerase that catalyzes the synthesis of inorganic polyphosphate (polyP) via transfer of phosphate from ATP to a growing polyP chain, releasing ADP. VTC exposes its catalytic domain VTC4 to the cytosol, where the growing polyP chain winds through a tunnel-shaped pocket, integrating cytoplasmic polymer synthesis with polyP membrane translocation. The VTC complex carries 9 vacuolar transmembrane domains, which are likely to constitute the translocation channel into the organelle lumen. PolyP synthesis is tightly coupled to its transport into the vacuole lumen, in order to avoid otherwise toxic intermediates in the cytosol, and it depends on the proton gradient across the membrane, formed by V-ATPase. Binds inositol hexakisphosphate (Ins6P) and similar inositol polyphosphates, such as 5-diphospho-inositol pentakisphosphate (5-InsP7); these are important intracellular signaling molecules. Inositol polyphosphate binding promotes vacuolar polyphosphate synthesis. The VTC complex also plays a role in vacuolar membrane fusion. Required for SEC18/NSF activity in SNARE priming, membrane binding of LMA1 and V(0) trans-complex formation. The polypeptide is Vacuolar transporter chaperone complex subunit 2 (Saccharomyces cerevisiae (strain ATCC 204508 / S288c) (Baker's yeast)).